The primary structure comprises 86 residues: Photosystem I reaction center subunit PsaK (86 aa).

2 helical membrane-spanning segments follow: residues 14–34 (LQWS…AIAF) and 57–77 (FGLP…VGAV).

It belongs to the PsaG/PsaK family.

It is found in the cellular thylakoid membrane. The chain is Photosystem I reaction center subunit PsaK from Nostoc punctiforme (strain ATCC 29133 / PCC 73102).